The chain runs to 873 residues: Coatomer subunit gamma-2 (873 aa).

A compositionally biased stretch (basic and acidic residues) spans 1–11; sequence MIKKFDKKDEE. The segment at 1–21 is disordered; the sequence is MIKKFDKKDEESGSGSNPFQH. HEAT repeat units lie at residues 64-101, 283-320, 321-355, 356-392, 395-430, and 467-504; these read TEAT…ISED, RELA…KHPS, AVTA…GSES, SVDR…KYPR, SVMM…ENPE, and PTPS…QNDD.

This sequence belongs to the COPG family. As to quaternary structure, oligomeric complex.

It is found in the cytoplasm. Its subcellular location is the golgi apparatus membrane. The protein localises to the cytoplasmic vesicle. It localises to the COPI-coated vesicle membrane. In terms of biological role, the coatomer is a cytosolic protein complex that binds to dilysine motifs and reversibly associates with Golgi non-clathrin-coated vesicles, which further mediate biosynthetic protein transport from the ER, via the Golgi up to the trans Golgi network. Coatomer complex is required for budding from Golgi membranes, and is essential for the retrograde Golgi-to-ER transport of dilysine-tagged proteins. In Danio rerio (Zebrafish), this protein is Coatomer subunit gamma-2 (copg2).